The chain runs to 244 residues: Inactive chemokine-binding protein (244 aa).

Positions 1-79 (MHVPASLQQS…STSVEDVDPP (79 aa)) are disordered. Polar residues predominate over residues 37 to 53 (QDQTPTNDKICQSVTEI). The segment covering 54 to 77 (TESESDPDPEVESEDDSTSVEDVD) has biased composition (acidic residues).

The protein belongs to the orthopoxvirus OPG001 family.

Its subcellular location is the host cytoplasm. Functionally, the protein is truncated in this vaccinal strain and presumably inactive, because the lack of signal peptide prevents the protein of being secreted. In the other strains inhibits host immune defense by binding to host chemokines. Binds host CC chemokines (beta chemokines) such as RANTES with high affinity, but not CXC or C chemokines (alpha and gamma chemokines). This is Inactive chemokine-binding protein (OPG001) from Vaccinia virus (strain Copenhagen) (VACV).